Here is a 119-residue protein sequence, read N- to C-terminus: Ribonuclease P protein component (119 aa).

The protein belongs to the RnpA family. As to quaternary structure, consists of a catalytic RNA component (M1 or rnpB) and a protein subunit.

It catalyses the reaction Endonucleolytic cleavage of RNA, removing 5'-extranucleotides from tRNA precursor.. RNaseP catalyzes the removal of the 5'-leader sequence from pre-tRNA to produce the mature 5'-terminus. It can also cleave other RNA substrates such as 4.5S RNA. The protein component plays an auxiliary but essential role in vivo by binding to the 5'-leader sequence and broadening the substrate specificity of the ribozyme. This Bacillus cereus (strain ZK / E33L) protein is Ribonuclease P protein component.